Reading from the N-terminus, the 242-residue chain is Ras-like protein family member 11A (242 aa).

The small GTPase-like stretch occupies residues Glu17 to Leu241. GTP is bound by residues Gly34 to Ser41, Asp81 to Gly85, and Asn147 to Asp150.

The protein belongs to the small GTPase superfamily. Ras family. Interacts with UBF/UBTF. In terms of tissue distribution, widely expressed. Down-regulated in prostate tumors compared to normal prostate tissue. High levels found in colon tumor and normal colon tissue followed by small intestine, liver, jejunum, ileum, bladder and aorta. Lowest levels observed in endothelial cells.

The protein resides in the nucleus. It is found in the nucleolus. The catalysed reaction is GTP + H2O = GDP + phosphate + H(+). Regulator of rDNA transcription. Acts in cooperation UBF/UBTF and positively regulates RNA polymerase I transcription. The sequence is that of Ras-like protein family member 11A from Homo sapiens (Human).